The sequence spans 715 residues: Methylcrotonoyl-CoA carboxylase subunit alpha, mitochondrial (715 aa).

The N-terminal 38 residues, 1 to 38 (MAAAALLAAVDRNQLRRVPILLLQPREWPWKHRTVKYG), are a transit peptide targeting the mitochondrion. One can recognise a Biotin carboxylation domain in the interval 45-490 (ITKVLIANRG…HTDFIPQHHK (446 aa)). Lys159 is a binding site for ATP. The ATP-grasp domain maps to 163 to 360 (KSIMAAAGVP…LVEWQLRIAA (198 aa)). An N6-acetyllysine modification is found at Lys193. Residues Lys201 and 207-208 (GG) contribute to the ATP site. Residue Lys233 is modified to N6-acetyllysine. His251, His278, and Glu318 together coordinate ATP. The active site involves Arg335. Lys490 bears the N6-acetyllysine mark. Lys577 carries the post-translational modification N6-acetyllysine; alternate. Lys577 is modified (N6-succinyllysine; alternate). The Biotinyl-binding domain occupies 622–711 (SIEVGIPVPK…NRHAPLVEFE (90 aa)). Lys677 is modified (N6-biotinyllysine).

In terms of assembly, probably a dodecamer composed of six biotin-containing alpha subunits (MCCC1) and six beta (MCCC2) subunits. Interacts (via the biotin carboxylation domain) with SIRT4. Requires biotin as cofactor. Acetylated.

The protein resides in the mitochondrion matrix. It carries out the reaction 3-methylbut-2-enoyl-CoA + hydrogencarbonate + ATP = 3-methyl-(2E)-glutaconyl-CoA + ADP + phosphate + H(+). It functions in the pathway amino-acid degradation; L-leucine degradation; (S)-3-hydroxy-3-methylglutaryl-CoA from 3-isovaleryl-CoA: step 2/3. Biotin-attachment subunit of the 3-methylcrotonyl-CoA carboxylase, an enzyme that catalyzes the conversion of 3-methylcrotonyl-CoA to 3-methylglutaconyl-CoA, a critical step for leucine and isovaleric acid catabolism. In Rattus norvegicus (Rat), this protein is Methylcrotonoyl-CoA carboxylase subunit alpha, mitochondrial.